The chain runs to 240 residues: Ubiquitin domain-containing protein 2 (240 aa).

Residues 1-48 (MGGCVGSHHDSSGSLNENSDGTGVALGRNQPLKREKPKWKSDYPMTDG) are disordered. Over residues 12-21 (SGSLNENSDG) the composition is skewed to polar residues. The segment covering 32–41 (LKREKPKWKS) has biased composition (basic and acidic residues). One can recognise a Ubiquitin-like domain in the interval 152-227 (CQLRLRLSTG…VQVIVSQPPT (76 aa)).

The protein localises to the cytoplasm. In Danio rerio (Zebrafish), this protein is Ubiquitin domain-containing protein 2 (ubtd2).